Reading from the N-terminus, the 231-residue chain is Small ribosomal subunit protein uS3 (231 aa).

The KH type-2 domain maps to 38–106; it reads IRVYLKNRLK…KTFVNIMEIK (69 aa).

This sequence belongs to the universal ribosomal protein uS3 family. As to quaternary structure, part of the 30S ribosomal subunit. Forms a tight complex with proteins S10 and S14.

Binds the lower part of the 30S subunit head. Binds mRNA in the 70S ribosome, positioning it for translation. This is Small ribosomal subunit protein uS3 from Endomicrobium trichonymphae.